The following is a 157-amino-acid chain: Glutaredoxin-2, mitochondrial (157 aa).

The N-terminal 18 residues, 1–18 (MYWRRAALVGTRLIPVRS), are a transit peptide targeting the mitochondrion. Serine 20 is subject to Phosphoserine. Residues 51 to 151 (VNQIQETISN…PLVHQCHLKN (101 aa)) enclose the Glutaredoxin domain. Cysteine 62 serves as a coordination point for [2Fe-2S] cluster. Lysine 68 serves as a coordination point for glutathione. At cysteine 71 the chain carries S-glutathionyl cysteine; alternate. A disulfide bond links cysteine 71 and cysteine 74. Residues glutamine 103 and valine 115 each contribute to the glutathione site. Cysteine 147 contacts [2Fe-2S] cluster.

Belongs to the glutaredoxin family. As to quaternary structure, monomer; active form. Homodimer; inactive form. The homodimer is probably linked by 1 2Fe-2S cluster.

Its subcellular location is the mitochondrion. The 2Fe-2S present in the homodimer leads to inactivation of the enzyme. The 2Fe-2S may serve as a redox sensor: the presence of one-electron oxidants or reductants leading to the loss of the 2Fe-2S cluster, subsequent monomerization and activation of the enzyme. In terms of biological role, glutathione-dependent oxidoreductase that facilitates the maintenance of mitochondrial redox homeostasis upon induction of apoptosis by oxidative stress. Involved in response to hydrogen peroxide and regulation of apoptosis caused by oxidative stress. Acts as a very efficient catalyst of monothiol reactions because of its high affinity for protein glutathione-mixed disulfides. Can receive electrons not only from glutathione (GSH), but also from thioredoxin reductase supporting both monothiol and dithiol reactions. Efficiently catalyzes both glutathionylation and deglutathionylation of mitochondrial complex I, which in turn regulates the superoxide production by the complex. Overexpression decreases the susceptibility to apoptosis and prevents loss of cardiolipin and cytochrome c release. This chain is Glutaredoxin-2, mitochondrial (GLRX2), found in Bos taurus (Bovine).